We begin with the raw amino-acid sequence, 322 residues long: HPr kinase/phosphorylase (322 aa).

Active-site residues include His146 and Lys167. An ATP-binding site is contributed by 161–168 (GDSGLGKS). Ser168 provides a ligand contact to Mg(2+). Asp185 acts as the Proton acceptor; for phosphorylation activity. Proton donor; for dephosphorylation activity in catalysis. The important for the catalytic mechanism of both phosphorylation and dephosphorylation stretch occupies residues 209–218 (LEVRGLGLLD). Glu210 contributes to the Mg(2+) binding site. Residue Arg250 is part of the active site. The interval 271-276 (QVAAGR) is important for the catalytic mechanism of dephosphorylation.

This sequence belongs to the HPrK/P family. As to quaternary structure, homohexamer. Requires Mg(2+) as cofactor.

It carries out the reaction [HPr protein]-L-serine + ATP = [HPr protein]-O-phospho-L-serine + ADP + H(+). The enzyme catalyses [HPr protein]-O-phospho-L-serine + phosphate + H(+) = [HPr protein]-L-serine + diphosphate. Catalyzes the ATP- as well as the pyrophosphate-dependent phosphorylation of a specific serine residue in HPr, a phosphocarrier protein of the phosphoenolpyruvate-dependent sugar phosphotransferase system (PTS). HprK/P also catalyzes the pyrophosphate-producing, inorganic phosphate-dependent dephosphorylation (phosphorolysis) of seryl-phosphorylated HPr (P-Ser-HPr). The chain is HPr kinase/phosphorylase from Burkholderia cenocepacia (strain HI2424).